A 308-amino-acid polypeptide reads, in one-letter code: Cytochrome b (308 aa).

Transmembrane regions (helical) follow at residues 1-21, 45-66, 81-101, and 146-166; these read FGLLLGICLIVQIVTGLLLAA, WLIRNLHANGASFFFICIYLHI, WNIGVILLLTLMATAFVGYVL, and FFALHFLLPFVIAGLTLVHLT. Histidine 51 and histidine 65 together coordinate heme b. Positions 150 and 164 each coordinate heme b. Histidine 169 contributes to the a ubiquinone binding site. 3 consecutive transmembrane segments (helical) span residues 194–214, 256–276, and 288–308; these read TKDMLGFALMLIPLITLALFS, LGGVLALAASVLVLFLIPLLH, and LSQILFWTLVANLLVLTWVGS.

Belongs to the cytochrome b family. In terms of assembly, the cytochrome bc1 complex contains 11 subunits: 3 respiratory subunits (MT-CYB, CYC1 and UQCRFS1), 2 core proteins (UQCRC1 and UQCRC2) and 6 low-molecular weight proteins (UQCRH/QCR6, UQCRB/QCR7, UQCRQ/QCR8, UQCR10/QCR9, UQCR11/QCR10 and a cleavage product of UQCRFS1). This cytochrome bc1 complex then forms a dimer. Heme b serves as cofactor.

The protein localises to the mitochondrion inner membrane. Component of the ubiquinol-cytochrome c reductase complex (complex III or cytochrome b-c1 complex) that is part of the mitochondrial respiratory chain. The b-c1 complex mediates electron transfer from ubiquinol to cytochrome c. Contributes to the generation of a proton gradient across the mitochondrial membrane that is then used for ATP synthesis. This chain is Cytochrome b (MT-CYB), found in Pomatostomus temporalis (Grey-crowned babbler).